A 453-amino-acid polypeptide reads, in one-letter code: MLNNIVNTIHSDKNQKGTFFIETWGCQMNEEDSEKLSGMLKNIGYKNAEDKNQADIIIFNTCCVRENAELKVYGNLGALKGLKSKNPNLIIAVCGCMMQQEGMAEAIIKKYPFVDIIFGTHNSYKFPEYLNRAKQEGKSIIEVWDKEEEIVEGIPVDRKSSTKAFVTIMYGCNNFCTYCIVPYVRGRERSREVSDIEKEIKELVKSGYKEITLLGQNVNSYGKDLEPKVSFAELLRHVNEIEGIERVRFMTSHPKDLTEDVIYAIKECDKLCNHIHLPVQSGSSRILKKMNRYYNREDYLNLVNKIKEEIPNVAITTDIIVGFPGETEEDFNETLELVKEVEYDSAFTFLYSKRKGTPAYDIEEQVPEDVKHDRFKKLVEVVNKSCEKNNKKYQDRIVKVLVEGESKNDKNKLSGRTDTAKLVNFIGNKDNIGKIVDVKITKTLSFSLEGEEV.

The MTTase N-terminal domain occupies 17–135 (GTFFIETWGC…FPEYLNRAKQ (119 aa)). Residues C26, C62, C96, C172, C176, and C179 each coordinate [4Fe-4S] cluster. Positions 158-388 (RKSSTKAFVT…VEVVNKSCEK (231 aa)) constitute a Radical SAM core domain. In terms of domain architecture, TRAM spans 391 to 453 (KKYQDRIVKV…LSFSLEGEEV (63 aa)).

The protein belongs to the methylthiotransferase family. MiaB subfamily. As to quaternary structure, monomer. The cofactor is [4Fe-4S] cluster.

The protein localises to the cytoplasm. It carries out the reaction N(6)-dimethylallyladenosine(37) in tRNA + (sulfur carrier)-SH + AH2 + 2 S-adenosyl-L-methionine = 2-methylsulfanyl-N(6)-dimethylallyladenosine(37) in tRNA + (sulfur carrier)-H + 5'-deoxyadenosine + L-methionine + A + S-adenosyl-L-homocysteine + 2 H(+). Functionally, catalyzes the methylthiolation of N6-(dimethylallyl)adenosine (i(6)A), leading to the formation of 2-methylthio-N6-(dimethylallyl)adenosine (ms(2)i(6)A) at position 37 in tRNAs that read codons beginning with uridine. In Clostridium tetani (strain Massachusetts / E88), this protein is tRNA-2-methylthio-N(6)-dimethylallyladenosine synthase.